Consider the following 491-residue polypeptide: Aspartyl/glutamyl-tRNA(Asn/Gln) amidotransferase subunit B (491 aa).

Belongs to the GatB/GatE family. GatB subfamily. Heterotrimer of A, B and C subunits.

The enzyme catalyses L-glutamyl-tRNA(Gln) + L-glutamine + ATP + H2O = L-glutaminyl-tRNA(Gln) + L-glutamate + ADP + phosphate + H(+). It catalyses the reaction L-aspartyl-tRNA(Asn) + L-glutamine + ATP + H2O = L-asparaginyl-tRNA(Asn) + L-glutamate + ADP + phosphate + 2 H(+). In terms of biological role, allows the formation of correctly charged Asn-tRNA(Asn) or Gln-tRNA(Gln) through the transamidation of misacylated Asp-tRNA(Asn) or Glu-tRNA(Gln) in organisms which lack either or both of asparaginyl-tRNA or glutaminyl-tRNA synthetases. The reaction takes place in the presence of glutamine and ATP through an activated phospho-Asp-tRNA(Asn) or phospho-Glu-tRNA(Gln). The chain is Aspartyl/glutamyl-tRNA(Asn/Gln) amidotransferase subunit B from Prochlorococcus marinus (strain NATL1A).